A 323-amino-acid polypeptide reads, in one-letter code: tRNA-dihydrouridine(16) synthase (323 aa).

Residues 7–9 (PME) and glutamine 68 contribute to the FMN site. Residue cysteine 98 is the Proton donor of the active site. Residues lysine 139, 200–202 (NGE), and 224–225 (CR) each bind FMN.

This sequence belongs to the Dus family. DusC subfamily. The cofactor is FMN.

It carries out the reaction 5,6-dihydrouridine(16) in tRNA + NADP(+) = uridine(16) in tRNA + NADPH + H(+). The enzyme catalyses 5,6-dihydrouridine(16) in tRNA + NAD(+) = uridine(16) in tRNA + NADH + H(+). Functionally, catalyzes the synthesis of 5,6-dihydrouridine (D), a modified base found in the D-loop of most tRNAs, via the reduction of the C5-C6 double bond in target uridines. Specifically modifies U16 in tRNAs. The chain is tRNA-dihydrouridine(16) synthase from Vibrio cholerae serotype O1 (strain ATCC 39315 / El Tor Inaba N16961).